The sequence spans 667 residues: Protein MAIN-LIKE 2 (667 aa).

Residue Met-1 is modified to N-acetylmethionine. Over residues 492–508 (MRGKERVRRKGMGKRRK) the composition is skewed to basic residues. Disordered regions lie at residues 492 to 523 (MRGK…EDES) and 594 to 667 (KLQE…TVVA). The span at 512–523 (PMEDYGGSEDES) shows a compositional bias: acidic residues. 2 stretches are compositionally biased toward basic and acidic residues: residues 608–618 (YDVKKEDKESK) and 656–667 (SLDRRGENTVVA).

Expressed in root tips, the shoot apical meristem (SAM), leaves, mature flowers and embryos.

The protein localises to the nucleus. Maybe required to maintain cell division activity in meristematic cells. The protein is Protein MAIN-LIKE 2 of Arabidopsis thaliana (Mouse-ear cress).